The primary structure comprises 210 residues: Na(+)-translocating NADH-quinone reductase subunit D (210 aa).

6 consecutive transmembrane segments (helical) span residues Pro14–Val34, Leu42–Ile62, Ile72–Ala92, Val103–Met123, Phe131–Val151, and Asn178–Ile198.

It belongs to the NqrDE/RnfAE family. Composed of six subunits; NqrA, NqrB, NqrC, NqrD, NqrE and NqrF.

The protein localises to the cell inner membrane. The catalysed reaction is a ubiquinone + n Na(+)(in) + NADH + H(+) = a ubiquinol + n Na(+)(out) + NAD(+). NQR complex catalyzes the reduction of ubiquinone-1 to ubiquinol by two successive reactions, coupled with the transport of Na(+) ions from the cytoplasm to the periplasm. NqrA to NqrE are probably involved in the second step, the conversion of ubisemiquinone to ubiquinol. The sequence is that of Na(+)-translocating NADH-quinone reductase subunit D from Shewanella baltica (strain OS223).